Reading from the N-terminus, the 491-residue chain is Cytochrome P450 2F5 (491 aa).

C436 contacts heme.

It belongs to the cytochrome P450 family. Requires heme as cofactor.

It localises to the endoplasmic reticulum membrane. The protein localises to the microsome membrane. It carries out the reaction an organic molecule + reduced [NADPH--hemoprotein reductase] + O2 = an alcohol + oxidized [NADPH--hemoprotein reductase] + H2O + H(+). Cytochromes P450 are a group of heme-thiolate monooxygenases. In liver microsomes, this enzyme is involved in an NADPH-dependent electron transport pathway. It oxidizes a variety of structurally unrelated compounds, including steroids, fatty acids, and xenobiotics. This Gorilla gorilla gorilla (Western lowland gorilla) protein is Cytochrome P450 2F5 (CYP2F5).